The sequence spans 490 residues: Cytochrome P450 monooxygenase aclL (490 aa).

A helical transmembrane segment spans residues 1–21; the sequence is MLFSLGPLTIVYGLVIFVVAK. N-linked (GlcNAc...) asparagine glycosylation occurs at N176. Residue C434 participates in heme binding.

This sequence belongs to the cytochrome P450 family. The cofactor is heme.

Its subcellular location is the membrane. It participates in mycotoxin biosynthesis. Functionally, cytochrome P450 monooxygenase; part of the gene cluster that mediates the biosynthesis of aspirochlorine (or antibiotic A30641), an unusual halogenated spiro compound with distinctive antifungal properties due to selective inhibition of protein biosynthesis, and which is also active against bacteria, viruses, and murine tumor cells. The non-ribosomal peptide synthetase (NRPS) aclP is responsible the formation of the diketopiperazine (DKP) core from the condensation of 2 phenylalanine residues. One Phe residue is tailored into chlorotyrosine by hydroxylation and chlorination, whereas the second Phe undergoes an unprecedented C-C bond cleavage to be converted into glycine. After formation of the DKP, sulfur is incorporated into the DKP by conjugation with glutathione by aclG, followed by its stepwise degradation to the thiol by aclI, aclJ and aclK, and the dithiol oxidation by aclT. In addition, oxygenases (aclB, aclC, aclL and aclO) and O-methyltransferases (aclM and aclU) act as tailoring enzymes to produce the intermediate dechloroaspirochlorine. Ultimately, chlorination of dechloroaspirochlorine by the halogenase aclH is the last step in the aspirochlorine pathway. The polypeptide is Cytochrome P450 monooxygenase aclL (Aspergillus oryzae (strain ATCC 42149 / RIB 40) (Yellow koji mold)).